We begin with the raw amino-acid sequence, 358 residues long: Isopentenyl-diphosphate delta-isomerase (358 aa).

12 to 13 is a substrate binding site; the sequence is RK. Residues 69-71, serine 99, and asparagine 128 contribute to the FMN site; that span reads AMT. Glutamine 158 contributes to the substrate binding site. Glutamate 159 lines the Mg(2+) pocket. Residues lysine 190, threonine 220, 267 to 269, and 288 to 289 contribute to the FMN site; these read GIR and AG.

This sequence belongs to the IPP isomerase type 2 family. As to quaternary structure, homooctamer. Dimer of tetramers. It depends on FMN as a cofactor. NADPH serves as cofactor. Mg(2+) is required as a cofactor.

Its subcellular location is the cytoplasm. The enzyme catalyses isopentenyl diphosphate = dimethylallyl diphosphate. Functionally, involved in the biosynthesis of isoprenoids. Catalyzes the 1,3-allylic rearrangement of the homoallylic substrate isopentenyl (IPP) to its allylic isomer, dimethylallyl diphosphate (DMAPP). In Listeria monocytogenes serotype 4b (strain F2365), this protein is Isopentenyl-diphosphate delta-isomerase.